The following is a 515-amino-acid chain: Maturase K (515 aa).

The protein belongs to the intron maturase 2 family. MatK subfamily.

It is found in the plastid. The protein localises to the chloroplast. Functionally, usually encoded in the trnK tRNA gene intron. Probably assists in splicing its own and other chloroplast group II introns. The sequence is that of Maturase K from Picea engelmannii (Engelmann's spruce).